Reading from the N-terminus, the 287-residue chain is MAAKIISGINIAKQIKQNIAQKIAQYIVNGYRRPGLAVILVGADPASQVYVNSKRKSCAEIGIESKYYDLPATITEVELLSIIQRLNSDEMIDGILVQLPLPEHINPIHITEAISSDKDVDGFHPYNVGRLCQKIPTLRSCTSYGVMKLLESTHIDLSGLHAVIVGASNIVGRPMAMELLLAGCTVTITHSRTKNLVDHLSSADIVIVGIGHPNFVKGEWLKQGAIVIDVGINRDTYSKKLVGDVDFLTAEAKASFITPVPGGVGPMTVAMLMQNTLQAYEHHLQAV.

Residues 166 to 168 (GAS), Ser191, and Ile232 contribute to the NADP(+) site.

The protein belongs to the tetrahydrofolate dehydrogenase/cyclohydrolase family. Homodimer.

It catalyses the reaction (6R)-5,10-methylene-5,6,7,8-tetrahydrofolate + NADP(+) = (6R)-5,10-methenyltetrahydrofolate + NADPH. The catalysed reaction is (6R)-5,10-methenyltetrahydrofolate + H2O = (6R)-10-formyltetrahydrofolate + H(+). Its pathway is one-carbon metabolism; tetrahydrofolate interconversion. In terms of biological role, catalyzes the oxidation of 5,10-methylenetetrahydrofolate to 5,10-methenyltetrahydrofolate and then the hydrolysis of 5,10-methenyltetrahydrofolate to 10-formyltetrahydrofolate. This is Bifunctional protein FolD from Haemophilus ducreyi (strain 35000HP / ATCC 700724).